A 212-amino-acid chain; its full sequence is Phosphatidylserine decarboxylase proenzyme (212 aa).

Catalysis depends on Ser182, which acts as the Schiff-base intermediate with substrate; via pyruvic acid. Ser182 is subject to Pyruvic acid (Ser); by autocatalysis.

It belongs to the phosphatidylserine decarboxylase family. PSD-A subfamily. Heterodimer of a large membrane-associated beta subunit and a small pyruvoyl-containing alpha subunit. Pyruvate is required as a cofactor. Post-translationally, is synthesized initially as an inactive proenzyme. Formation of the active enzyme involves a self-maturation process in which the active site pyruvoyl group is generated from an internal serine residue via an autocatalytic post-translational modification. Two non-identical subunits are generated from the proenzyme in this reaction, and the pyruvate is formed at the N-terminus of the alpha chain, which is derived from the carboxyl end of the proenzyme. The post-translation cleavage follows an unusual pathway, termed non-hydrolytic serinolysis, in which the side chain hydroxyl group of the serine supplies its oxygen atom to form the C-terminus of the beta chain, while the remainder of the serine residue undergoes an oxidative deamination to produce ammonia and the pyruvoyl prosthetic group on the alpha chain.

Its subcellular location is the cell membrane. The enzyme catalyses a 1,2-diacyl-sn-glycero-3-phospho-L-serine + H(+) = a 1,2-diacyl-sn-glycero-3-phosphoethanolamine + CO2. It functions in the pathway phospholipid metabolism; phosphatidylethanolamine biosynthesis; phosphatidylethanolamine from CDP-diacylglycerol: step 2/2. Its function is as follows. Catalyzes the formation of phosphatidylethanolamine (PtdEtn) from phosphatidylserine (PtdSer). The chain is Phosphatidylserine decarboxylase proenzyme from Chlorobium chlorochromatii (strain CaD3).